A 35-amino-acid chain; its full sequence is Conotoxin TxMEKL-0422 (35 aa).

Residues 1–35 (NPASCCSCADVDPGRASRKTPKGEDQVFIKEKDRC) form a disordered region. Positions 21 to 35 (PKGEDQVFIKEKDRC) are enriched in basic and acidic residues.

Post-translationally, contains disulfide bonds. Expressed by the venom duct.

Its subcellular location is the secreted. The protein is Conotoxin TxMEKL-0422 of Conus textile (Cloth-of-gold cone).